The primary structure comprises 339 residues: Transaldolase (339 aa).

K135 serves as the catalytic Schiff-base intermediate with substrate.

The protein belongs to the transaldolase family. Type 1 subfamily. In terms of assembly, homodimer.

It localises to the cytoplasm. The enzyme catalyses D-sedoheptulose 7-phosphate + D-glyceraldehyde 3-phosphate = D-erythrose 4-phosphate + beta-D-fructose 6-phosphate. Its pathway is carbohydrate degradation; pentose phosphate pathway; D-glyceraldehyde 3-phosphate and beta-D-fructose 6-phosphate from D-ribose 5-phosphate and D-xylulose 5-phosphate (non-oxidative stage): step 2/3. Its function is as follows. Transaldolase is important for the balance of metabolites in the pentose-phosphate pathway. This chain is Transaldolase, found in Prochlorococcus marinus (strain MIT 9211).